The primary structure comprises 404 residues: Cysteine desulfurase IscS (404 aa).

Residues 75-76 (AT), Asn-155, Gln-183, and 203-205 (SSH) contribute to the pyridoxal 5'-phosphate site. Lys-206 carries the post-translational modification N6-(pyridoxal phosphate)lysine. Thr-243 contributes to the pyridoxal 5'-phosphate binding site. The active-site Cysteine persulfide intermediate is the Cys-328. Cys-328 contributes to the [2Fe-2S] cluster binding site.

This sequence belongs to the class-V pyridoxal-phosphate-dependent aminotransferase family. NifS/IscS subfamily. Homodimer. Forms a heterotetramer with IscU, interacts with other sulfur acceptors. It depends on pyridoxal 5'-phosphate as a cofactor.

The protein resides in the cytoplasm. The enzyme catalyses (sulfur carrier)-H + L-cysteine = (sulfur carrier)-SH + L-alanine. Its pathway is cofactor biosynthesis; iron-sulfur cluster biosynthesis. Functionally, master enzyme that delivers sulfur to a number of partners involved in Fe-S cluster assembly, tRNA modification or cofactor biosynthesis. Catalyzes the removal of elemental sulfur atoms from cysteine to produce alanine. Functions as a sulfur delivery protein for Fe-S cluster synthesis onto IscU, an Fe-S scaffold assembly protein, as well as other S acceptor proteins. This Pasteurella multocida (strain Pm70) protein is Cysteine desulfurase IscS.